The chain runs to 350 residues: Protein RecA (350 aa).

ATP is bound at residue 67 to 74 (GPESSGKT).

It belongs to the RecA family.

The protein resides in the cytoplasm. Its function is as follows. Can catalyze the hydrolysis of ATP in the presence of single-stranded DNA, the ATP-dependent uptake of single-stranded DNA by duplex DNA, and the ATP-dependent hybridization of homologous single-stranded DNAs. It interacts with LexA causing its activation and leading to its autocatalytic cleavage. This chain is Protein RecA, found in Wolinella succinogenes (strain ATCC 29543 / DSM 1740 / CCUG 13145 / JCM 31913 / LMG 7466 / NCTC 11488 / FDC 602W) (Vibrio succinogenes).